A 180-amino-acid polypeptide reads, in one-letter code: uncharacterized protein (180 aa).

The next 2 membrane-spanning stretches (helical) occupy residues 37-59 (VLHA…FPSF) and 128-147 (AGSA…VLFV).

It localises to the cell membrane. This is an uncharacterized protein from Treponema pallidum (strain Nichols).